Reading from the N-terminus, the 365-residue chain is MLPIGIFYQFYAYFALVLSIPILYMQLRARNIPCLLLLFWLTLTTLIYVVESAIWSNPYAETIRWMGYGLCDITSRIVTCSSIGIPASAFTLVLYLDTVIRRDHPLKRYENWIWHVCLSILLPLIIMAMMVPLESNRYVVICMNGCYSSFYQTWYTLLFFYIPPCLLSFGGLFFVSRIVVLYWRRQRELQQFFQRDSQLTSKRFLRLLCLAAVFFLGYFPLTIFMVVANGKLQQFLPFNHELVEAWHQESITYYPTTKVGLNDWVPPTVLYLMSLFFSTSGGWTEKVALILWSLLVWLPFTKNTALGRHAQFKLDCCKSIESTMAGKTLDSTDFKEKCLVLERQWSKSSIPSDNSSELQDAAKYV.

Helical transmembrane passes span 7–24 (FYQF…PILY), 31–54 (NIPC…ESAI), 73–100 (ITSR…DTVI), 116–133 (VCLS…MVPL), 155–182 (YTLL…VVLY), 204–226 (FLRL…IFMV), and 265–283 (VPPT…SGGW).

It belongs to the G-protein coupled receptor 4 family.

Its subcellular location is the membrane. Its function is as follows. Receptor for the peptide pheromone M-factor, a mating factor of S.pombe. Pheromone signaling is essential for initiation of meiosis in S.pombe; M-factor signaling alone may be sufficient. The sequence is that of Pheromone M-factor receptor (map3) from Schizosaccharomyces pombe (strain 972 / ATCC 24843) (Fission yeast).